The chain runs to 706 residues: Septin ring organizing protein mid2 (706 aa).

2 disordered regions span residues 62–102 (STAP…PFST) and 145–180 (DEAS…KKNP). Composition is skewed to polar residues over residues 81–90 (YDQTLSNSSS) and 149–169 (NKSS…SNQG). A Phosphoserine modification is found at S379. The PH domain maps to 583-688 (TLLCDGYLCQ…WMSTLRQHLG (106 aa)).

Belongs to the BUD4 family.

The protein localises to the cytoplasm. It localises to the cell cortex. It is found in the cytoskeleton. Functionally, responsible for the proper stability and function of septins during cytokinesis. Required for the correct formation of the medial septin ring structure in mitosis and for the proper localization of endo-glucanases agn1 and eng1, which are needed for efficient cell separation. May act as a landmark for the localization of hydrolytic proteins to the medial region. The sequence is that of Septin ring organizing protein mid2 (mid2) from Schizosaccharomyces pombe (strain 972 / ATCC 24843) (Fission yeast).